Reading from the N-terminus, the 330-residue chain is MKTAYIAKQRQISFVKSHFSRQLEERLGLIEVQAPILSRVGDGTQDNLSGCEKAVQVKVKALPDAQFEVVHSLAKWKRQTLGQHDFSAGEGLYTHMKALRPDEDRLSPLHSVYVDQWDWERVMGDGERQFSTLKSTVEAIWGGIKATEAAVSEEFGLAPFLPDQIHFVHSQELLSRYPDLDAKGRERAIAKDLGAVFLVGIGGKLSDGHRHDVRAPDYDDWSTPSELGHAGLNGDILVWNPVLEDAFELSSMGIRVDADTLKHQLALTGDEDRLELEWHQALLRGEMPQTIGGGIGQSRLTMLLLQLPHIGQVQCGVWPAAVRESVPSLL.

The protein belongs to the class-II aminoacyl-tRNA synthetase family. AsnA subfamily.

The protein localises to the cytoplasm. It carries out the reaction L-aspartate + NH4(+) + ATP = L-asparagine + AMP + diphosphate + H(+). It functions in the pathway amino-acid biosynthesis; L-asparagine biosynthesis; L-asparagine from L-aspartate (ammonia route): step 1/1. In Escherichia coli O127:H6 (strain E2348/69 / EPEC), this protein is Aspartate--ammonia ligase.